Reading from the N-terminus, the 224-residue chain is MVKKLQIAIDGPASAGKSTVAKLVAKKLGYIYCDTGAMYRAVTYAALKANISLDDDEALKNLLQDFKLEFVPAEPEQKVFVNGEEVTQIIRTPDITNNVSLVSAQPSVRQDLTHRQQEIADNGGIVMDGRDIGTTVLPNAEVKIFLVASVEQRALRRYKENIAKGIDTPLEVLEKEIAERDYKDSHRKISPLVQAKDAVKVDTTPLTIDEVVNEIMNIIEERNH.

11 to 19 (GPASAGKST) contacts ATP.

Belongs to the cytidylate kinase family. Type 1 subfamily.

Its subcellular location is the cytoplasm. It catalyses the reaction CMP + ATP = CDP + ADP. The catalysed reaction is dCMP + ATP = dCDP + ADP. This Ligilactobacillus salivarius (strain UCC118) (Lactobacillus salivarius) protein is Cytidylate kinase.